We begin with the raw amino-acid sequence, 380 residues long: Chaperone protein DnaJ (380 aa).

The 68-residue stretch at 5–72 folds into the J domain; sequence DYYETLGVAK…QKRAAYDQYG (68 aa). The CR-type zinc finger occupies 140 to 218; the sequence is GKDTQIRIPS…CNGAGRIKSN (79 aa). The Zn(2+) site is built by cysteine 153, cysteine 156, cysteine 170, cysteine 173, cysteine 192, cysteine 195, cysteine 206, and cysteine 209. CXXCXGXG motif repeat units follow at residues 153–160, 170–177, 192–199, and 206–213; these read CSTCDGTG, CPTCSGSG, CPSCHGTG, and CTACNGAG. The interval 357–380 is disordered; sequence LKKGGERHSPNAKSWTDRVKDLFK.

It belongs to the DnaJ family. In terms of assembly, homodimer. Requires Zn(2+) as cofactor.

It is found in the cytoplasm. Functionally, participates actively in the response to hyperosmotic and heat shock by preventing the aggregation of stress-denatured proteins and by disaggregating proteins, also in an autonomous, DnaK-independent fashion. Unfolded proteins bind initially to DnaJ; upon interaction with the DnaJ-bound protein, DnaK hydrolyzes its bound ATP, resulting in the formation of a stable complex. GrpE releases ADP from DnaK; ATP binding to DnaK triggers the release of the substrate protein, thus completing the reaction cycle. Several rounds of ATP-dependent interactions between DnaJ, DnaK and GrpE are required for fully efficient folding. Also involved, together with DnaK and GrpE, in the DNA replication of plasmids through activation of initiation proteins. In Methylibium petroleiphilum (strain ATCC BAA-1232 / LMG 22953 / PM1), this protein is Chaperone protein DnaJ.